A 741-amino-acid chain; its full sequence is Eukaryotic translation initiation factor 3 subunit B (741 aa).

Positions 1-10 (MAPSFDTLSE) are enriched in polar residues. The segment at 1–21 (MAPSFDTLSEQDLHEEEEEEI) is disordered. An RRM domain is found at 40-126 (TFIVIDGLPI…HTLAVNKLMD (87 aa)). WD repeat units follow at residues 193 to 230 (AHWT…KQKQ), 232 to 289 (PHPF…RSFV), 303 to 344 (APKK…LLGK), 514 to 557 (IEKK…EKAE), and 572 to 610 (VEHY…HTFA). The interval 696–723 (DAYGIPEDADDAKVAKDAPPVSEDQGEA) is disordered.

This sequence belongs to the eIF-3 subunit B family. As to quaternary structure, component of the eukaryotic translation initiation factor 3 (eIF-3) complex.

The protein localises to the cytoplasm. Functionally, RNA-binding component of the eukaryotic translation initiation factor 3 (eIF-3) complex, which is involved in protein synthesis of a specialized repertoire of mRNAs and, together with other initiation factors, stimulates binding of mRNA and methionyl-tRNAi to the 40S ribosome. The eIF-3 complex specifically targets and initiates translation of a subset of mRNAs involved in cell proliferation. The polypeptide is Eukaryotic translation initiation factor 3 subunit B (prt1) (Aspergillus oryzae (strain ATCC 42149 / RIB 40) (Yellow koji mold)).